The sequence spans 155 residues: Large ribosomal subunit protein uL16 (155 aa).

Belongs to the universal ribosomal protein uL16 family. Part of the 50S ribosomal subunit.

In terms of biological role, binds 23S rRNA and is also seen to make contacts with the A and possibly P site tRNAs. The sequence is that of Large ribosomal subunit protein uL16 from Synechococcus sp. (strain CC9311).